The sequence spans 150 residues: Globin-5 (150 aa).

The region spanning 11-150 is the Globin domain; it reads PLSAAEKTKI…MICILLRSAY (140 aa). Heme b contacts are provided by His74 and His106.

It belongs to the globin family. Monomer at high oxygen tension and high pH and dimeric at low oxygen tension and lower pH.

The chain is Globin-5 from Petromyzon marinus (Sea lamprey).